Here is a 58-residue protein sequence, read N- to C-terminus: Metallothionein-1 (58 aa).

The beta stretch occupies residues 1-28 (PGPCCNDKCVCKEGGCKEGCQCTSCRCS). 18 residues coordinate a divalent metal cation: C4, C5, C9, C11, C16, C20, C22, C25, C27, C30, C33, C37, C39, C45, C49, C53, C55, and C56. The segment at 29–58 (PCEKCSSGCKCANKEECSKTCSKACSCCPT) is alpha.

Belongs to the metallothionein superfamily. Type 3 family.

Metallothioneins have a high content of cysteine residues that bind various heavy metals. Class I MTS in marine crustacea are involved in the sequestration of elevated levels of heavy-metal ions. This is Metallothionein-1 from Scylla serrata (Mud crab).